We begin with the raw amino-acid sequence, 464 residues long: Ubiquinone biosynthesis monooxygenase COQ6, mitochondrial (464 aa).

The transit peptide at methionine 1 to leucine 24 directs the protein to the mitochondrion.

Belongs to the UbiH/COQ6 family. In terms of assembly, component of a multi-subunit COQ enzyme complex, composed of at least coq3, coq4, coq5, coq6, coq7 and coq9. Interacts with coq8b and coq7. FAD is required as a cofactor.

Its subcellular location is the mitochondrion inner membrane. The protein resides in the golgi apparatus. It is found in the cell projection. It catalyses the reaction a 4-hydroxy-3-(all-trans-polyprenyl)benzoate + 2 reduced [2Fe-2S]-[ferredoxin] + O2 + 2 H(+) = a 3,4-dihydroxy-5-(all-trans-polyprenyl)benzoate + 2 oxidized [2Fe-2S]-[ferredoxin] + H2O. The catalysed reaction is a 2-methoxy-6-(all-trans-polyprenyl)phenol + 2 reduced [2Fe-2S]-[ferredoxin] + O2 + 2 H(+) = a 2-methoxy-6-(all-trans-polyprenyl)benzene-1,4-diol + 2 oxidized [2Fe-2S]-[ferredoxin] + H2O. It functions in the pathway cofactor biosynthesis; ubiquinone biosynthesis. Its function is as follows. FAD-dependent monooxygenase required for two non-consecutive steps during ubiquinone biosynthesis. Required for the C5-ring hydroxylation during ubiquinone biosynthesis by catalyzing the hydroxylation of 4-hydroxy-3-(all-trans-polyprenyl)benzoic acid to 3,4-dihydroxy-5-(all-trans-polyprenyl)benzoic acid. Also acts downstream of coq4, for the C1-hydroxylation during ubiquinone biosynthesis by catalyzing the hydroxylation of 2-methoxy-6-(all-trans-polyprenyl)phenol to 2-methoxy-6-(all-trans-polyprenyl)benzene-1,4-diol. The electrons required for the hydroxylation reaction are funneled indirectly to coq6 from NADPH via a ferredoxin/ferredoxin reductase system. The sequence is that of Ubiquinone biosynthesis monooxygenase COQ6, mitochondrial from Xenopus tropicalis (Western clawed frog).